Reading from the N-terminus, the 523-residue chain is MGSLPTDNLESMSICSQNPLDPDEFRRQGHMIIDFLADYYKNVKVSSRSQANPGSQQTLPETAPNHSESIETILQDVQNDIIPGITHWQSPNYFAYFPSSGSVAGFLGEMLSSGFNVVGFNWMSSPAATELESIVMNWLGQMLNLPKSFLFSSDDNAGSSGGGVLQGTTCEAILCTLTASRDKMLNKIGRENINKLVVYASDQTHCALQKAAQIAGINPKNFRAIATSKATDFGLSPQALLSTILADIESGLVPLFLCATVGTTSSTAVDPIGPLCEVAKQFGIWVHVDAAYAGSACICPEFRHFIDGVEEADSFSLNAHKWFFTTLDCCCLWVKDSNALVKALSTSPEYLKNKATDSKQVIDYKDWQIALSRRFRSMKLWLVLRSYGVANLRSFLRSHVKMAKHFDGLIAMDKRFEIVVPNTFAMVCFRLKPAAIFNGKLGENGVDYNCIEEKTNEINSKLLESVNASGSIYMTHAVVGGVYMIRFAVGATLTEERHVSMAWKVIQEHTDAILGTVDDSVVA.

The segment covering 1 to 19 (MGSLPTDNLESMSICSQNP) has biased composition (polar residues). 2 disordered regions span residues 1–20 (MGSL…QNPL) and 47–66 (SRSQ…APNH). Position 321 is an N6-(pyridoxal phosphate)lysine (K321).

This sequence belongs to the group II decarboxylase family. In terms of assembly, homodimer. Requires pyridoxal 5'-phosphate as cofactor. Roots.

The enzyme catalyses L-tyrosine + H(+) = tyramine + CO2. It carries out the reaction L-dopa + H(+) = dopamine + CO2. It catalyses the reaction 5-hydroxy-L-tryptophan + H(+) = serotonin + CO2. Its function is as follows. May play an important role in providing precursors for alkaloid synthesis in the roots and germinating seedlings. This is Tyrosine/DOPA decarboxylase 5 (TYDC5) from Papaver somniferum (Opium poppy).